A 38-amino-acid polypeptide reads, in one-letter code: Small toxic protein BsrG (38 aa).

A helical transmembrane segment spans residues 11–31 (INFGGLILNTVLLIFNIMMIV).

It is found in the cell membrane. Its function is as follows. Toxic component of a type I toxin-antitoxin (TA) system; expression in the absence of cognate antisense antitoxin SR4 RNA leads to cell lysis. Induced expression causes membrane invaginations that dislocate the cell wall synthesis machinery, leading to eventual death. Unlike many type I TA systems it does not form pores. Base pairing occurs between the 3' UTRs of bsrG mRNA and SR4 RNA, which leads to initiation of degradation by RNase III (rnc) followed by the action of RNase Y (rny) and RNase R (rnr). Not toxic when expressed in E.coli. When induced during logarithmic growth it only slowly exerts its toxic effect. Expression during log growth leads to significant disturbances of cell envelope biosynthesis and cell morphology, causing cell membrane invaginations and delocalization of cell division and cell wall synthesis machinery. Cell lysis depends on mreB, lytC and lytD, suggesting expression of bsrG triggers autolysis rather than disintegration of the membrane. Additionally expression of bsrG also inhibits transcription. This chain is Small toxic protein BsrG, found in Bacillus subtilis (strain 168).